Reading from the N-terminus, the 406-residue chain is Arginine biosynthesis bifunctional protein ArgJ (406 aa).

The substrate site is built by T156, K182, T193, E279, N401, and T406. T193 functions as the Nucleophile in the catalytic mechanism.

Belongs to the ArgJ family. In terms of assembly, heterotetramer of two alpha and two beta chains.

The protein localises to the cytoplasm. It carries out the reaction N(2)-acetyl-L-ornithine + L-glutamate = N-acetyl-L-glutamate + L-ornithine. The catalysed reaction is L-glutamate + acetyl-CoA = N-acetyl-L-glutamate + CoA + H(+). It functions in the pathway amino-acid biosynthesis; L-arginine biosynthesis; L-ornithine and N-acetyl-L-glutamate from L-glutamate and N(2)-acetyl-L-ornithine (cyclic): step 1/1. The protein operates within amino-acid biosynthesis; L-arginine biosynthesis; N(2)-acetyl-L-ornithine from L-glutamate: step 1/4. Its activity is regulated as follows. Feedback inhibition by L-arginine. Functionally, catalyzes two activities which are involved in the cyclic version of arginine biosynthesis: the synthesis of N-acetylglutamate from glutamate and acetyl-CoA as the acetyl donor, and of ornithine by transacetylation between N(2)-acetylornithine and glutamate. This Bacillus amyloliquefaciens (Bacillus velezensis) protein is Arginine biosynthesis bifunctional protein ArgJ.